Reading from the N-terminus, the 301-residue chain is Nucleotide-binding protein MAB_2783c (301 aa).

24-31 (GLSGAGRG) is a binding site for ATP. Position 75–78 (75–78 (DVRS)) interacts with GTP.

The protein belongs to the RapZ-like family.

Functionally, displays ATPase and GTPase activities. The chain is Nucleotide-binding protein MAB_2783c from Mycobacteroides abscessus (strain ATCC 19977 / DSM 44196 / CCUG 20993 / CIP 104536 / JCM 13569 / NCTC 13031 / TMC 1543 / L948) (Mycobacterium abscessus).